The following is a 308-amino-acid chain: HPr kinase/phosphorylase (308 aa).

Catalysis depends on residues histidine 138 and lysine 159. 153–160 (GESGLGKS) contacts ATP. Serine 160 contributes to the Mg(2+) binding site. Aspartate 177 acts as the Proton acceptor; for phosphorylation activity. Proton donor; for dephosphorylation activity in catalysis. The interval 201–210 (LEVRGLGLLD) is important for the catalytic mechanism of both phosphorylation and dephosphorylation. Glutamate 202 is a binding site for Mg(2+). The active site involves arginine 243. Positions 264–269 (QVAAGR) are important for the catalytic mechanism of dephosphorylation.

This sequence belongs to the HPrK/P family. As to quaternary structure, homohexamer. Mg(2+) is required as a cofactor.

The enzyme catalyses [HPr protein]-L-serine + ATP = [HPr protein]-O-phospho-L-serine + ADP + H(+). The catalysed reaction is [HPr protein]-O-phospho-L-serine + phosphate + H(+) = [HPr protein]-L-serine + diphosphate. Functionally, catalyzes the ATP- as well as the pyrophosphate-dependent phosphorylation of a specific serine residue in HPr, a phosphocarrier protein of the phosphoenolpyruvate-dependent sugar phosphotransferase system (PTS). HprK/P also catalyzes the pyrophosphate-producing, inorganic phosphate-dependent dephosphorylation (phosphorolysis) of seryl-phosphorylated HPr (P-Ser-HPr). The chain is HPr kinase/phosphorylase from Bordetella avium (strain 197N).